A 164-amino-acid polypeptide reads, in one-letter code: V-type proton ATPase subunit c' (164 aa).

The Lumenal portion of the chain corresponds to 1-16 (MDMVASDNVYAPLYAP). The helical transmembrane segment at 17-37 (FFGFAGCALAMILSCLGAAIG) threads the bilayer. Residues 38 to 59 (TAKSGIGIAGIGTFKPELIMKS) lie on the Cytoplasmic side of the membrane. The chain crosses the membrane as a helical span at residues 60–80 (LIPVVMSGILAIYGLVVAVLI). At 81-98 (AGNLSPTEEYTLFNGFMH) the chain is on the lumenal side. Residues 99–119 (LSCGLCVGFACLSSGYAIGIV) form a helical membrane-spanning segment. At 120–136 (GDVGVRKYMHQPRLFVG) the chain is on the cytoplasmic side. A helical transmembrane segment spans residues 137–157 (IVLILIFSEVLGLYGMIIALI). Residues 158–164 (LNTKGSE) are Lumenal-facing.

The protein belongs to the V-ATPase proteolipid subunit family. As to quaternary structure, V-ATPase is a heteromultimeric enzyme composed of a peripheral catalytic V1 complex (components A to H) attached to an integral membrane V0 proton pore complex (components: a, c, c', c'', d, e, f and VOA1). The decameric c-ring forms the proton-conducting pore, and is composed of eight proteolipid subunits c, one subunit c' and one subunit c''.

The protein localises to the vacuole membrane. Proton-conducting pore forming subunit of the V0 complex of vacuolar(H+)-ATPase (V-ATPase), a multisubunit enzyme composed of a peripheral complex (V1) that hydrolyzes ATP and a membrane integral complex (V0) that translocates protons. V-ATPase is responsible for acidifying and maintaining the pH of intracellular compartments. This Candida glabrata (strain ATCC 2001 / BCRC 20586 / JCM 3761 / NBRC 0622 / NRRL Y-65 / CBS 138) (Yeast) protein is V-type proton ATPase subunit c' (VMA11).